Reading from the N-terminus, the 617-residue chain is Leucine aminopeptidase 2 (617 aa).

A peptide contacts are provided by residues 139–141 and 271–276; these read QCQ and PYGGME. Residue His300 coordinates Zn(2+). The active-site Proton acceptor is the Glu301. Residues His304 and Glu323 each contribute to the Zn(2+) site. The active-site Proton donor is Tyr388.

The protein belongs to the peptidase M1 family. It depends on Zn(2+) as a cofactor.

The protein resides in the cytoplasm. The protein localises to the nucleus. The enzyme catalyses an epoxide + H2O = an ethanediol. Aminopeptidase that preferentially cleaves di- and tripeptides. Also has low epoxide hydrolase activity (in vitro). Can hydrolyze the epoxide leukotriene LTA(4) but it forms preferentially 5,6-dihydroxy-7,9,11,14-eicosatetraenoic acid rather than the cytokine leukotriene B(4) as the product compared to the homologous mammalian enzyme (in vitro). This chain is Leucine aminopeptidase 2, found in Neosartorya fischeri (strain ATCC 1020 / DSM 3700 / CBS 544.65 / FGSC A1164 / JCM 1740 / NRRL 181 / WB 181) (Aspergillus fischerianus).